A 236-amino-acid chain; its full sequence is Alpha-tubulin N-acetyltransferase (236 aa).

Residues 21-201 (ASVPDGVSRW…NKFVVFHGFF (181 aa)) form the N-acetyltransferase domain. Acetyl-CoA-binding positions include 134 to 147 (FYVDESCQRQGYGK) and 171 to 180 (SDKLLGFMKK). Residues 217-236 (SPTGAAAAATGTKAKNEMPG) are disordered. Over residues 219-229 (TGAAAAATGTK) the composition is skewed to low complexity.

It belongs to the acetyltransferase ATAT1 family.

The enzyme catalyses L-lysyl-[alpha-tubulin] + acetyl-CoA = N(6)-acetyl-L-lysyl-[alpha-tubulin] + CoA + H(+). In terms of biological role, specifically acetylates 'Lys-40' in alpha-tubulin on the lumenal side of microtubules. Promotes microtubule destabilization and accelerates microtubule dynamics; this activity may be independent of acetylation activity. Acetylates alpha-tubulin with a slow enzymatic rate, due to a catalytic site that is not optimized for acetyl transfer. Enters the microtubule through each end and diffuses quickly throughout the lumen of microtubules. Acetylates only long/old microtubules because of its slow acetylation rate since it does not have time to act on dynamically unstable microtubules before the enzyme is released. The sequence is that of Alpha-tubulin N-acetyltransferase from Leishmania braziliensis.